A 203-amino-acid chain; its full sequence is Recombination protein RecR (203 aa).

The C4-type zinc-finger motif lies at 56–71 (CAVCGNVSDDERCRIC). Residues 79–179 (ALVCVVEEPK…TVTRIASGLP (101 aa)) form the Toprim domain.

Belongs to the RecR family.

Its function is as follows. May play a role in DNA repair. It seems to be involved in an RecBC-independent recombinational process of DNA repair. It may act with RecF and RecO. In Mycobacterium ulcerans (strain Agy99), this protein is Recombination protein RecR.